The following is a 265-amino-acid chain: Urease accessory protein UreH (265 aa).

This sequence belongs to the UreD family. In terms of assembly, ureH, UreF and UreG form a complex that acts as a GTP-hydrolysis-dependent molecular chaperone, activating the urease apoprotein by helping to assemble the nickel containing metallocenter of UreC. The UreE protein probably delivers the nickel.

Its subcellular location is the cytoplasm. Required for maturation of urease via the functional incorporation of the urease nickel metallocenter. The chain is Urease accessory protein UreH from Helicobacter pylori (strain G27).